Reading from the N-terminus, the 125-residue chain is Ribonuclease P protein component (125 aa).

Belongs to the RnpA family. Consists of a catalytic RNA component (M1 or rnpB) and a protein subunit.

It carries out the reaction Endonucleolytic cleavage of RNA, removing 5'-extranucleotides from tRNA precursor.. Functionally, RNaseP catalyzes the removal of the 5'-leader sequence from pre-tRNA to produce the mature 5'-terminus. It can also cleave other RNA substrates such as 4.5S RNA. The protein component plays an auxiliary but essential role in vivo by binding to the 5'-leader sequence and broadening the substrate specificity of the ribozyme. This chain is Ribonuclease P protein component, found in Rhodococcus opacus (strain B4).